The following is a 288-amino-acid chain: Hydroxyethylthiazole kinase (288 aa).

Met-55 provides a ligand contact to substrate. ATP contacts are provided by Asn-131 and Ser-177. Gly-204 contacts substrate.

The protein belongs to the Thz kinase family. Mg(2+) is required as a cofactor.

It catalyses the reaction 5-(2-hydroxyethyl)-4-methylthiazole + ATP = 4-methyl-5-(2-phosphooxyethyl)-thiazole + ADP + H(+). It participates in cofactor biosynthesis; thiamine diphosphate biosynthesis; 4-methyl-5-(2-phosphoethyl)-thiazole from 5-(2-hydroxyethyl)-4-methylthiazole: step 1/1. In terms of biological role, catalyzes the phosphorylation of the hydroxyl group of 4-methyl-5-beta-hydroxyethylthiazole (THZ). This Haloquadratum walsbyi (strain DSM 16790 / HBSQ001) protein is Hydroxyethylthiazole kinase.